The chain runs to 202 residues: ATP-dependent Clp protease proteolytic subunit (202 aa).

Serine 98 functions as the Nucleophile in the catalytic mechanism. Histidine 123 is an active-site residue.

This sequence belongs to the peptidase S14 family. In terms of assembly, fourteen ClpP subunits assemble into 2 heptameric rings which stack back to back to give a disk-like structure with a central cavity, resembling the structure of eukaryotic proteasomes.

It is found in the cytoplasm. It carries out the reaction Hydrolysis of proteins to small peptides in the presence of ATP and magnesium. alpha-casein is the usual test substrate. In the absence of ATP, only oligopeptides shorter than five residues are hydrolyzed (such as succinyl-Leu-Tyr-|-NHMec, and Leu-Tyr-Leu-|-Tyr-Trp, in which cleavage of the -Tyr-|-Leu- and -Tyr-|-Trp bonds also occurs).. Its function is as follows. Cleaves peptides in various proteins in a process that requires ATP hydrolysis. Has a chymotrypsin-like activity. Plays a major role in the degradation of misfolded proteins. This Solidesulfovibrio magneticus (strain ATCC 700980 / DSM 13731 / RS-1) (Desulfovibrio magneticus) protein is ATP-dependent Clp protease proteolytic subunit.